We begin with the raw amino-acid sequence, 120 residues long: T-cell receptor beta chain V region PHDS203 (120 aa).

An N-terminal signal peptide occupies residues 1–11; sequence VVLCFLGTGLV. The v segment stretch occupies residues 12–106; that stretch reads DMKVTQMSRY…TSVYFCAQGA (95 aa). A disulfide bridge links cysteine 34 with cysteine 102. Positions 107–120 are j segment; the sequence is PEQYFGPGTRLTVL.

This Mus musculus (Mouse) protein is T-cell receptor beta chain V region PHDS203.